Consider the following 325-residue polypeptide: Forkhead box protein B1 (325 aa).

Positions 12–103 (QKPPYSYISL…GDMFENGSFL (92 aa)) form a DNA-binding region, fork-head. Residues 284–309 (LSNSPPSLSPTSSQTATSQSSPATPS) show a composition bias toward low complexity. The segment at 284-325 (LSNSPPSLSPTSSQTATSQSSPATPSETLTSPASALHSVAVH) is disordered.

The protein localises to the nucleus. Its function is as follows. Transcription factor expressed by neural progenitor cells in specific regions of the embryonic neuroepithelium. Essential for the mammillary nuclei maintenance. Negatively regulates the proliferation of oligodendrocyte progenitors and promotes oligodendrocyte maturation. Also expressed in mammary glands, plays a role in lactation, controls development of mammary glands and the inferior colliculi of the midbrain in the central nervous system that regulates the milk-ejection reflex. The sequence is that of Forkhead box protein B1 (FOXB1) from Homo sapiens (Human).